The sequence spans 449 residues: Naphthalene 1,2-dioxygenase system, large oxygenase component (449 aa).

The 99-residue stretch at 39-137 (WLFLTHDSLI…LNKKCLGLKE (99 aa)) folds into the Rieske domain. Residues C81, H83, C101, and H104 each coordinate [2Fe-2S] cluster. 3 residues coordinate Fe cation: H208, H213, and D362.

The protein belongs to the bacterial ring-hydroxylating dioxygenase alpha subunit family. As to quaternary structure, the naphthalene dioxygenase (NDO) multicomponent enzyme system is composed of an electron transfer component and a dioxygenase component (iron sulfur protein (ISP)). The electron transfer component is composed of a ferredoxin reductase (NdoR) and a ferredoxin (NdoA), and the dioxygenase component is formed of a heterohexamer (trimer of heterodimers) of three large alpha subunits (NdoB) and three small beta subunits (NdoC). Requires [2Fe-2S] cluster as cofactor. The cofactor is Fe(2+).

The enzyme catalyses naphthalene + NADH + O2 + H(+) = (1R,2S)-1,2-dihydronaphthalene-1,2-diol + NAD(+). The protein operates within aromatic compound metabolism; naphthalene degradation. Functionally, component of the naphthalene dioxygenase (NDO) multicomponent enzyme system which catalyzes the incorporation of both atoms of molecular oxygen into naphthalene to form cis-(1R,2S)-dihydroxy-1,2-dihydronaphthalene. The alpha subunit has a catalytic role in the holoenzyme. In Pseudomonas fluorescens, this protein is Naphthalene 1,2-dioxygenase system, large oxygenase component.